The chain runs to 339 residues: Dihydroorotate dehydrogenase (quinone) (339 aa).

FMN contacts are provided by residues 61–65 and threonine 85; that span reads AGLDK. Substrate is bound at residue lysine 65. Residue 110–114 participates in substrate binding; that stretch reads NRMGF. FMN is bound by residues asparagine 138 and asparagine 171. Residue asparagine 171 participates in substrate binding. Serine 174 acts as the Nucleophile in catalysis. Residue asparagine 176 coordinates substrate. Lysine 216 and threonine 244 together coordinate FMN. Substrate is bound at residue 245-246; sequence NT. FMN is bound by residues glycine 267, glycine 296, and 317 to 318; that span reads YS.

Belongs to the dihydroorotate dehydrogenase family. Type 2 subfamily. As to quaternary structure, monomer. FMN serves as cofactor.

Its subcellular location is the cell membrane. It carries out the reaction (S)-dihydroorotate + a quinone = orotate + a quinol. Its pathway is pyrimidine metabolism; UMP biosynthesis via de novo pathway; orotate from (S)-dihydroorotate (quinone route): step 1/1. In terms of biological role, catalyzes the conversion of dihydroorotate to orotate with quinone as electron acceptor. The protein is Dihydroorotate dehydrogenase (quinone) of Pseudomonas fluorescens (strain Pf0-1).